The following is a 341-amino-acid chain: Homeobox protein knotted-1-like 8 (341 aa).

Residues 1-17 (MESFASLAGGGSSSTTA) are compositionally biased toward low complexity. Disordered stretches follow at residues 1 to 72 (MESF…AVQG), 121 to 148 (AAQQLDEADGHPRRRHEPQRDDDPDQLD), and 187 to 207 (AESNCEGTGSSEEEQDPSDKQ). The segment covering 187-196 (AESNCEGTGS) has biased composition (polar residues). In terms of domain architecture, ELK spans 207 to 227 (QLKHQLLRKYGGSLGDLRQVF). A DNA-binding region (homeobox; TALE-type) is located at residues 228–291 (SKRTKKGKLP…NQRKRHWKPT (64 aa)).

Belongs to the TALE/KNOX homeobox family.

It is found in the nucleus. Probable transcription factor that may be involved in shoot formation during embryogenesis. This chain is Homeobox protein knotted-1-like 8 (OSH43), found in Oryza sativa subsp. japonica (Rice).